The following is a 233-amino-acid chain: tRNA (guanine-N(7)-)-methyltransferase (233 aa).

Positions 1–23 (MSPQDRPSRTTEAFFGRRRGKPV) are disordered. 4 residues coordinate S-adenosyl-L-methionine: Glu64, Glu89, Asp116, and Asp138. Residue Asp138 is part of the active site. Residues Lys142, Asp174, and 212-215 (TRYE) contribute to the substrate site.

Belongs to the class I-like SAM-binding methyltransferase superfamily. TrmB family.

The enzyme catalyses guanosine(46) in tRNA + S-adenosyl-L-methionine = N(7)-methylguanosine(46) in tRNA + S-adenosyl-L-homocysteine. Its pathway is tRNA modification; N(7)-methylguanine-tRNA biosynthesis. Functionally, catalyzes the formation of N(7)-methylguanine at position 46 (m7G46) in tRNA. The polypeptide is tRNA (guanine-N(7)-)-methyltransferase (Mesorhizobium japonicum (strain LMG 29417 / CECT 9101 / MAFF 303099) (Mesorhizobium loti (strain MAFF 303099))).